Reading from the N-terminus, the 177-residue chain is Translation initiation factor IF-3 (177 aa).

It belongs to the IF-3 family. In terms of assembly, monomer.

It is found in the cytoplasm. Functionally, IF-3 binds to the 30S ribosomal subunit and shifts the equilibrium between 70S ribosomes and their 50S and 30S subunits in favor of the free subunits, thus enhancing the availability of 30S subunits on which protein synthesis initiation begins. The protein is Translation initiation factor IF-3 of Nitratiruptor sp. (strain SB155-2).